Reading from the N-terminus, the 97-residue chain is Large ribosomal subunit protein uL23 (97 aa).

This sequence belongs to the universal ribosomal protein uL23 family. Part of the 50S ribosomal subunit. Contacts protein L29, and trigger factor when it is bound to the ribosome.

In terms of biological role, one of the early assembly proteins it binds 23S rRNA. One of the proteins that surrounds the polypeptide exit tunnel on the outside of the ribosome. Forms the main docking site for trigger factor binding to the ribosome. The sequence is that of Large ribosomal subunit protein uL23 from Brucella suis (strain ATCC 23445 / NCTC 10510).